An 837-amino-acid chain; its full sequence is Protein translocase subunit SecA 1 (837 aa).

ATP-binding positions include Gln-85, 103–107 (GEGKT), and Asp-492. The tract at residues 791–837 (KGEAINPAEGKPEAKRQPIRKDQHIGRNDPCPCGSGKKYKNCHGKEA) is disordered. The segment covering 800 to 817 (GKPEAKRQPIRKDQHIGR) has biased composition (basic and acidic residues). 4 residues coordinate Zn(2+): Cys-821, Cys-823, Cys-832, and His-833. A compositionally biased stretch (basic residues) spans 827–837 (KKYKNCHGKEA).

Belongs to the SecA family. Monomer and homodimer. Part of the essential Sec protein translocation apparatus which comprises SecA, SecYEG and auxiliary proteins SecDF. Other proteins may also be involved. Zn(2+) serves as cofactor.

It is found in the cell membrane. The protein localises to the cytoplasm. It carries out the reaction ATP + H2O + cellular proteinSide 1 = ADP + phosphate + cellular proteinSide 2.. Functionally, part of the Sec protein translocase complex. Interacts with the SecYEG preprotein conducting channel. Has a central role in coupling the hydrolysis of ATP to the transfer of proteins into and across the cell membrane, serving as an ATP-driven molecular motor driving the stepwise translocation of polypeptide chains across the membrane. The chain is Protein translocase subunit SecA 1 from Listeria monocytogenes serovar 1/2a (strain ATCC BAA-679 / EGD-e).